A 272-amino-acid chain; its full sequence is Acetyl-coenzyme A carboxylase carboxyl transferase subunit alpha (272 aa).

A CoA carboxyltransferase C-terminal domain is found at 1 to 248 (MDKDFMKINV…KKTIVDSLLE (248 aa)).

The protein belongs to the AccA family. In terms of assembly, acetyl-CoA carboxylase is a heterohexamer composed of biotin carboxyl carrier protein (AccB), biotin carboxylase (AccC) and two subunits each of ACCase subunit alpha (AccA) and ACCase subunit beta (AccD).

The protein localises to the cytoplasm. It carries out the reaction N(6)-carboxybiotinyl-L-lysyl-[protein] + acetyl-CoA = N(6)-biotinyl-L-lysyl-[protein] + malonyl-CoA. It functions in the pathway lipid metabolism; malonyl-CoA biosynthesis; malonyl-CoA from acetyl-CoA: step 1/1. Component of the acetyl coenzyme A carboxylase (ACC) complex. First, biotin carboxylase catalyzes the carboxylation of biotin on its carrier protein (BCCP) and then the CO(2) group is transferred by the carboxyltransferase to acetyl-CoA to form malonyl-CoA. This chain is Acetyl-coenzyme A carboxylase carboxyl transferase subunit alpha, found in Clostridium beijerinckii (strain ATCC 51743 / NCIMB 8052) (Clostridium acetobutylicum).